A 412-amino-acid polypeptide reads, in one-letter code: Interferon-inducible GTPase 5 (412 aa).

The region spanning 51-234 (TRLEVGVTGE…PMLVTTWEHD (184 aa)) is the IRG-type G domain. GTP contacts are provided by residues 60-67 (ESGAGKSS), 85-89 (TGVVE), and 215-217 (SNL). Residues Ser-246 and Ser-303 each carry the phosphoserine modification.

The protein belongs to the TRAFAC class dynamin-like GTPase superfamily. IRG family. Interacts with PLIN2/ADRP and COX4I1/COXIV. Expressed in spermatozoa tails from the testis and epididymis, where it may be a component of the fibrous sheath (at protein level).

It is found in the cell projection. Its subcellular location is the cilium. The protein resides in the flagellum. It localises to the lipid droplet. It carries out the reaction GTP + H2O = GDP + phosphate + H(+). In terms of biological role, required for sperm motility and therefore male fertility, via positive regulation of spermatozoa fibrous sheath formation. In Mus musculus (Mouse), this protein is Interferon-inducible GTPase 5.